Here is a 1199-residue protein sequence, read N- to C-terminus: Putative pyruvate-flavodoxin oxidoreductase (1199 aa).

4Fe-4S ferredoxin-type domains follow at residues Glu-681–Tyr-710 and Phe-737–Leu-766. Cys-690, Cys-693, Cys-696, Cys-700, Cys-746, Cys-749, Cys-752, Cys-756, Cys-820, Cys-823, Cys-848, and Cys-1079 together coordinate [4Fe-4S] cluster.

The protein belongs to the pyruvate:ferredoxin/flavodoxin oxidoreductase family. Requires [4Fe-4S] cluster as cofactor.

It catalyses the reaction oxidized [flavodoxin] + pyruvate + CoA + 2 H(+) = reduced [flavodoxin] + acetyl-CoA + CO2. Oxidoreductase required for the transfer of electrons from pyruvate to flavodoxin. This is Putative pyruvate-flavodoxin oxidoreductase (nifJ) from Synechocystis sp. (strain ATCC 27184 / PCC 6803 / Kazusa).